We begin with the raw amino-acid sequence, 511 residues long: Maturase K (511 aa).

This sequence belongs to the intron maturase 2 family. MatK subfamily.

The protein localises to the plastid. The protein resides in the chloroplast. In terms of biological role, usually encoded in the trnK tRNA gene intron. Probably assists in splicing its own and other chloroplast group II introns. In Paulownia tomentosa (Princess tree), this protein is Maturase K.